The primary structure comprises 302 residues: Dehydrodolichyl diphosphate synthase 3 (302 aa).

It belongs to the UPP synthase family. Requires Mg(2+) as cofactor.

It functions in the pathway protein modification; protein glycosylation. In terms of biological role, catalyzes cis-prenyl chain elongation to produce the polyprenyl backbone of dolichol, a glycosyl carrier-lipid required for the biosynthesis of several classes of glycoprotein. In Arabidopsis thaliana (Mouse-ear cress), this protein is Dehydrodolichyl diphosphate synthase 3.